A 199-amino-acid polypeptide reads, in one-letter code: MSEEQILNTHNASILLSAANKSHYPQDDLPEIALAGRSNVGKSSFINTILGRKSLARTSSKPGKTQLLNFFNVDDKLRLVDVPGYGYAKVSKAERARWGKMIEEYLTTRQNLRAVVSLVDFRHESSQDDIQMYEFLKYYEIPVIIVATKADKVPRGRWNKHESMVKKSLNFDQTDAFIIFSSVERIGIDESWDTILEYL.

The region spanning 28–199 is the EngB-type G domain; sequence DLPEIALAGR…ESWDTILEYL (172 aa). GTP-binding positions include 36–43, 63–67, 81–84, 148–151, and 180–182; these read GRSNVGKS, GKTQL, DVPG, TKAD, and FSS. Residues Ser-43 and Thr-65 each contribute to the Mg(2+) site.

The protein belongs to the TRAFAC class TrmE-Era-EngA-EngB-Septin-like GTPase superfamily. EngB GTPase family. The cofactor is Mg(2+).

Its function is as follows. Necessary for normal cell division and for the maintenance of normal septation. The polypeptide is Probable GTP-binding protein EngB (Streptococcus equi subsp. equi (strain 4047)).